The chain runs to 97 residues: Co-chaperonin GroES (97 aa).

Belongs to the GroES chaperonin family. Heptamer of 7 subunits arranged in a ring. Interacts with the chaperonin GroEL.

It is found in the cytoplasm. Functionally, together with the chaperonin GroEL, plays an essential role in assisting protein folding. The GroEL-GroES system forms a nano-cage that allows encapsulation of the non-native substrate proteins and provides a physical environment optimized to promote and accelerate protein folding. GroES binds to the apical surface of the GroEL ring, thereby capping the opening of the GroEL channel. The sequence is that of Co-chaperonin GroES from Nocardioides sp. (strain ATCC BAA-499 / JS614).